A 266-amino-acid polypeptide reads, in one-letter code: Ribosomal RNA small subunit methyltransferase A (266 aa).

6 residues coordinate S-adenosyl-L-methionine: Asn16, Leu18, Gly43, Glu64, Asp89, and Asn110.

Belongs to the class I-like SAM-binding methyltransferase superfamily. rRNA adenine N(6)-methyltransferase family. RsmA subfamily.

Its subcellular location is the cytoplasm. It catalyses the reaction adenosine(1518)/adenosine(1519) in 16S rRNA + 4 S-adenosyl-L-methionine = N(6)-dimethyladenosine(1518)/N(6)-dimethyladenosine(1519) in 16S rRNA + 4 S-adenosyl-L-homocysteine + 4 H(+). Its function is as follows. Specifically dimethylates two adjacent adenosines (A1518 and A1519) in the loop of a conserved hairpin near the 3'-end of 16S rRNA in the 30S particle. May play a critical role in biogenesis of 30S subunits. This is Ribosomal RNA small subunit methyltransferase A from Marinomonas sp. (strain MWYL1).